Reading from the N-terminus, the 318-residue chain is Protein LplB (318 aa).

Transmembrane regions (helical) follow at residues 35-55, 94-114, 130-150, 182-202, 236-256, and 289-309; these read LIPG…GVLI, LMLA…LALL, FIYV…FVFF, IVMQ…LAAL, IIVL…EQVY, and AVGL…NYIA. Residues 90 to 305 form the ABC transmembrane type-1 domain; it reads LRNTLMLASL…VVGIILIFGA (216 aa).

This sequence belongs to the binding-protein-dependent transport system permease family. MalFG subfamily.

The protein resides in the cell membrane. This is Protein LplB (lplB) from Bacillus subtilis (strain 168).